The following is an 845-amino-acid chain: Translation initiation factor IF-2 (845 aa).

Disordered stretches follow at residues 44 to 91 (KRRK…NLSS) and 119 to 256 (ARRA…NQEP). The segment covering 119-129 (ARRAKEREESL) has biased composition (basic and acidic residues). Positions 139-148 (DETPQEEEEP) are enriched in acidic residues. Residues 156–165 (SLSPAQSQIE) are compositionally biased toward polar residues. Basic and acidic residues-rich tracts occupy residues 179-194 (IEKR…DRNS) and 202-217 (SEVR…DEKR). The tr-type G domain occupies 343–510 (LRPPVVTIMG…AILLQAEILD (168 aa)). The tract at residues 352 to 359 (GHVDHGKT) is G1. 352–359 (GHVDHGKT) provides a ligand contact to GTP. The tract at residues 377 to 381 (GITQH) is G2. The G3 stretch occupies residues 398 to 401 (DTPG). GTP contacts are provided by residues 398–402 (DTPGH) and 452–455 (NKID). The segment at 452–455 (NKID) is G4. The interval 488 to 490 (SAK) is G5.

It belongs to the TRAFAC class translation factor GTPase superfamily. Classic translation factor GTPase family. IF-2 subfamily.

The protein localises to the cytoplasm. In terms of biological role, one of the essential components for the initiation of protein synthesis. Protects formylmethionyl-tRNA from spontaneous hydrolysis and promotes its binding to the 30S ribosomal subunits. Also involved in the hydrolysis of GTP during the formation of the 70S ribosomal complex. This Bartonella henselae (strain ATCC 49882 / DSM 28221 / CCUG 30454 / Houston 1) (Rochalimaea henselae) protein is Translation initiation factor IF-2.